We begin with the raw amino-acid sequence, 394 residues long: Protein TsgA homolog (394 aa).

The next 12 helical transmembrane spans lie at 11–31 (WISY…GIVM), 51–71 (FLNA…EIIP), 76–96 (LVFG…GHNL), 101–121 (ISMF…TFLV), 134–154 (LLFT…AAAM), 162–182 (WYWV…LTLC), 206–226 (VGVL…LGFI), 246–266 (QLVS…SFIL), 274–294 (IVTV…STDN), 302–322 (ILAL…LGSL), 334–354 (FILT…GPIV), and 363–383 (LETA…LGFF).

The protein belongs to the major facilitator superfamily. TsgA family.

Its subcellular location is the cell inner membrane. The sequence is that of Protein TsgA homolog from Yersinia pestis bv. Antiqua (strain Antiqua).